A 334-amino-acid polypeptide reads, in one-letter code: Tryptophan--tRNA ligase (334 aa).

Residues 11–13 (QPS) and 19–20 (GN) each bind ATP. The 'HIGH' region signature appears at 12-20 (PSGELTIGN). D135 is a binding site for L-tryptophan. Residues 147-149 (GED), V186, and 195-199 (KMSKS) each bind ATP. The short motif at 195 to 199 (KMSKS) is the 'KMSKS' region element.

It belongs to the class-I aminoacyl-tRNA synthetase family. In terms of assembly, homodimer.

It localises to the cytoplasm. It carries out the reaction tRNA(Trp) + L-tryptophan + ATP = L-tryptophyl-tRNA(Trp) + AMP + diphosphate + H(+). Functionally, catalyzes the attachment of tryptophan to tRNA(Trp). Amino acylates tRNA(Trp) with both L- and D-tryptophan, although D-tryptophan is a poor substrate. The chain is Tryptophan--tRNA ligase from Escherichia coli (strain K12).